The primary structure comprises 283 residues: NAD kinase (283 aa).

The active-site Proton acceptor is the D61. Residues 61-62 (DG), 134-135 (ND), R145, D164, 175-180 (TAYNLS), and Q234 contribute to the NAD(+) site.

Belongs to the NAD kinase family. A divalent metal cation is required as a cofactor.

It is found in the cytoplasm. It carries out the reaction NAD(+) + ATP = ADP + NADP(+) + H(+). Its function is as follows. Involved in the regulation of the intracellular balance of NAD and NADP, and is a key enzyme in the biosynthesis of NADP. Catalyzes specifically the phosphorylation on 2'-hydroxyl of the adenosine moiety of NAD to yield NADP. The sequence is that of NAD kinase from Clostridium kluyveri (strain NBRC 12016).